The sequence spans 503 residues: uncharacterized protein (503 aa).

ABC transporter domains follow at residues 8–249 (VPVA…LGRD) and 261–499 (IVDQ…MSAI). An ATP-binding site is contributed by 43–50 (GKNGAGKS).

Belongs to the ABC transporter superfamily.

In terms of biological role, probably part of a binding-protein-dependent transport system YphDEF. Probably responsible for energy coupling to the transport system. This is an uncharacterized protein from Escherichia coli (strain K12).